The sequence spans 120 residues: Large ribosomal subunit protein uL18 (120 aa).

This sequence belongs to the universal ribosomal protein uL18 family. Part of the 50S ribosomal subunit; part of the 5S rRNA/L5/L18/L25 subcomplex. Contacts the 5S and 23S rRNAs.

Its function is as follows. This is one of the proteins that bind and probably mediate the attachment of the 5S RNA into the large ribosomal subunit, where it forms part of the central protuberance. The sequence is that of Large ribosomal subunit protein uL18 from Bradyrhizobium sp. (strain BTAi1 / ATCC BAA-1182).